Consider the following 579-residue polypeptide: Mitogen-activated protein kinase kinase kinase 7 (579 aa).

Residues Met1–Tyr300 form an interaction with MAPK8IP1 region. Residues Ile36–Phe291 enclose the Protein kinase domain. Residues Val42–Val50 and Lys63 each bind ATP. Lys72 participates in a covalent cross-link: Glycyl lysine isopeptide (Lys-Gly) (interchain with G-Cter in ubiquitin). The active-site Proton acceptor is Asp156. A Glycyl lysine isopeptide (Lys-Gly) (interchain with G-Cter in ubiquitin) cross-link involves residue Lys158. A phosphothreonine; by autocatalysis mark is found at Thr184 and Thr187. Ser192 bears the Phosphoserine; by autocatalysis mark. A Glycyl lysine isopeptide (Lys-Gly) (interchain with G-Cter in ubiquitin) cross-link involves residue Lys209. Disordered regions lie at residues Pro301 to Pro339 and Lys354 to Asp391. The span at Asp306 to Ile322 shows a compositional bias: polar residues. 2 stretches are compositionally biased toward low complexity: residues Thr323–Asn334 and Ser361–Ser375. Residues Ser367, Ser389, and Ser412 each carry the phosphoserine modification. The span at Leu416–Gln425 shows a compositional bias: polar residues. The segment at Leu416–Asp466 is disordered. The segment covering Val426 to Arg436 has biased composition (low complexity). Ser428 is modified (phosphoserine).

The protein belongs to the protein kinase superfamily. STE Ser/Thr protein kinase family. MAP kinase kinase kinase subfamily. In terms of assembly, can form homodimer. Binds both upstream activators and downstream substrates in multimolecular complexes. Interacts with TAB1/MAP3K7IP1, TAB2/MAP3K7IP2 and TAB3/MAP3K7IP3. Identified in the TRIKA2 complex composed of MAP3K7/TAK1, TAB1/MAP3K7IP1 and TAB2/MAP3K7IP2. Interacts with PPM1L and PPM1B/PP2CB. Interaction with PP2A and PPP6C leads to its repressed activity. Interacts with TRAF6 and TAB1/MAP3K7IP1; during IL-1 signaling. Interacts with TAOK1 and TAOK2; interaction with TAOK2 interferes with MAP3K7 interaction with IKKA, thus preventing NF-kappa-B activation. Interacts with DYNC2I2 (via WD domains). Interacts with CYLD and RBCK1. Interacts with TGFBR1; induces MAP3K7/TAK1 activation by TRAF6. Interacts with MAPK8IP1 and SMAD6. Interacts with isoform 1 of VRK2. Interacts with DAB2; the interaction is induced by TGF-beta stimulation and may mediate TGF-beta stimulated JNK activation. Interacts with TRIM5. Part of a complex containing ITCH, NDFIP1 and MAP3K7. Interacts with IFIT5; the interaction synergizes the recruitment of IKK to MAP3K7 and enhances IKK phosphorylation. Interacts with PLEKHM1 (via N- and C-terminus). Found in a complex with SH3RF1, RAC2, MAP2K7/MKK7, MAPK8IP1/JIP1, MAPK8/JNK1 and MAPK9/JNK2. Interacts with SASH1. Interacts with RIPK1. Requires Mg(2+) as cofactor. In terms of processing, association with TAB1/MAP3K7IP1 promotes autophosphorylation at Ser-192 and subsequent activation. Association with TAB2/MAP3K7IP2, itself associated with free unanchored Lys-63 polyubiquitin chain, promotes autophosphorylation and subsequent activation of MAP3K7. Dephosphorylation at Ser-192 by PPM1B/PP2CB and at Thr-187 by PP2A and PPP6C leads to inactivation. 'Lys-48'-linked polyubiquitination at Lys-72 is induced by TNFalpha, and leads to proteasomal degradation. Undergoes 'Lys-48'-linked polyubiquitination catalyzed by ITCH. 'Lys-63'-linked polyubiquitination at Lys-158 by TRIM8 does not lead to proteasomal degradation but contributes to autophosphorylation and activation. Deubiquitinated by CYLD, a protease that selectively cleaves 'Lys-63'-linked ubiquitin chains. Deubiquitinated by USP19; leading to negative regulation of TNF-alpha- and IL-1beta-triggered NF-kappa-B activation.

The protein resides in the cytoplasm. It localises to the cell membrane. The catalysed reaction is L-seryl-[protein] + ATP = O-phospho-L-seryl-[protein] + ADP + H(+). It carries out the reaction L-threonyl-[protein] + ATP = O-phospho-L-threonyl-[protein] + ADP + H(+). Its activity is regulated as follows. Activated by pro-inflammatory cytokines and in response to physical and chemical stresses, including osmotic stress, oxidative stress, arsenic and ultraviolet light irradiation. Activated by 'Lys-63'-linked polyubiquitination and by autophosphorylation. Association with TAB1/MAP3K7IP1 and TAB2/MAP3K7IP2 promotes activation through autophosphorylation, whereas PPM1B/PP2CB, PP2A and PPP6C dephosphorylation leads to inactivation. Ceramides are also able to activate MAP3K7/TAK1. Functionally, serine/threonine kinase which acts as an essential component of the MAP kinase signal transduction pathway. Plays an important role in the cascades of cellular responses evoked by changes in the environment. Mediates signal transduction of TRAF6, various cytokines including interleukin-1 (IL-1), transforming growth factor-beta (TGFB), TGFB-related factors like BMP2 and BMP4, toll-like receptors (TLR), tumor necrosis factor receptor CD40 and B-cell receptor (BCR). Once activated, acts as an upstream activator of the MKK/JNK signal transduction cascade and the p38 MAPK signal transduction cascade through the phosphorylation and activation of several MAP kinase kinases like MAP2K1/MEK1, MAP2K3/MKK3, MAP2K6/MKK6 and MAP2K7/MKK7. These MAP2Ks in turn activate p38 MAPKs and c-jun N-terminal kinases (JNKs); both p38 MAPK and JNK pathways control the transcription factors activator protein-1 (AP-1). Independently of MAP2Ks and p38 MAPKs, acts as a key activator of NF-kappa-B by promoting activation of the I-kappa-B-kinase (IKK) core complex. Mechanistically, recruited to polyubiquitin chains of RIPK2 and IKBKG/NEMO via TAB2/MAP3K7IP2 and TAB3/MAP3K7IP3, and catalyzes phosphorylation and activation of IKBKB/IKKB component of the IKK complex, leading to NF-kappa-B activation. In osmotic stress signaling, plays a major role in the activation of MAPK8/JNK1, but not that of NF-kappa-B. Promotes TRIM5 capsid-specific restriction activity. Phosphorylates RIPK1 at 'Ser-321' which positively regulates RIPK1 interaction with RIPK3 to promote necroptosis but negatively regulates RIPK1 kinase activity and its interaction with FADD to mediate apoptosis. Phosphorylates STING1 in response to cGAMP-activation, promoting association between STEEP1 and STING1 and STING1 translocation to COPII vesicles. The protein is Mitogen-activated protein kinase kinase kinase 7 (MAP3K7) of Bos taurus (Bovine).